The primary structure comprises 150 residues: SsrA-binding protein (150 aa).

The tract at residues 127 to 150 (KRETEKQRDWQREKARIMKGDAKD) is disordered.

It belongs to the SmpB family.

The protein localises to the cytoplasm. In terms of biological role, required for rescue of stalled ribosomes mediated by trans-translation. Binds to transfer-messenger RNA (tmRNA), required for stable association of tmRNA with ribosomes. tmRNA and SmpB together mimic tRNA shape, replacing the anticodon stem-loop with SmpB. tmRNA is encoded by the ssrA gene; the 2 termini fold to resemble tRNA(Ala) and it encodes a 'tag peptide', a short internal open reading frame. During trans-translation Ala-aminoacylated tmRNA acts like a tRNA, entering the A-site of stalled ribosomes, displacing the stalled mRNA. The ribosome then switches to translate the ORF on the tmRNA; the nascent peptide is terminated with the 'tag peptide' encoded by the tmRNA and targeted for degradation. The ribosome is freed to recommence translation, which seems to be the essential function of trans-translation. This is SsrA-binding protein from Cupriavidus necator (strain ATCC 17699 / DSM 428 / KCTC 22496 / NCIMB 10442 / H16 / Stanier 337) (Ralstonia eutropha).